A 242-amino-acid polypeptide reads, in one-letter code: Type III pantothenate kinase (242 aa).

Position 6–13 (6–13 (DAGNTRLK)) interacts with ATP. Residues Tyr90 and 97-100 (GADR) each bind substrate. Asp99 serves as the catalytic Proton acceptor. Asp119 contacts K(+). Ser122 lines the ATP pocket. Thr174 contributes to the substrate binding site.

Belongs to the type III pantothenate kinase family. As to quaternary structure, homodimer. NH4(+) is required as a cofactor. The cofactor is K(+).

The protein localises to the cytoplasm. The catalysed reaction is (R)-pantothenate + ATP = (R)-4'-phosphopantothenate + ADP + H(+). The protein operates within cofactor biosynthesis; coenzyme A biosynthesis; CoA from (R)-pantothenate: step 1/5. Catalyzes the phosphorylation of pantothenate (Pan), the first step in CoA biosynthesis. The protein is Type III pantothenate kinase of Marinobacter nauticus (strain ATCC 700491 / DSM 11845 / VT8) (Marinobacter aquaeolei).